The sequence spans 290 residues: Endo-1,4-beta-xylanase B (290 aa).

A signal peptide spans 1-19 (MVSFNSLLVAVSAATCALA). Residue asparagine 26 is glycosylated (N-linked (GlcNAc...) asparagine). One can recognise a GH11 domain in the interval 34–222 (QSTPAGTGTN…SSGSSTVTVN (189 aa)). The active-site Nucleophile is glutamate 118. Glutamate 209 functions as the Proton donor in the catalytic mechanism. The tract at residues 223-248 (PAGGVTSPIAPTGPSSVSTTPSGPSS) is disordered. Residues 234 to 248 (TGPSSVSTTPSGPSS) are compositionally biased toward low complexity. The region spanning 255–290 (TCSALYGQCGGQGWTGPTCCSSGTCKFSNNWYSQCL) is the CBM1 domain.

Belongs to the glycosyl hydrolase 11 (cellulase G) family.

The protein localises to the secreted. The catalysed reaction is Endohydrolysis of (1-&gt;4)-beta-D-xylosidic linkages in xylans.. It participates in glycan degradation; xylan degradation. Its function is as follows. Endo-1,4-beta-xylanase involved in the hydrolysis of xylan, a major structural heterogeneous polysaccharide found in plant biomass representing the second most abundant polysaccharide in the biosphere, after cellulose. The chain is Endo-1,4-beta-xylanase B (xynB) from Phanerodontia chrysosporium (White-rot fungus).